We begin with the raw amino-acid sequence, 371 residues long: Chaperone protein DnaJ (371 aa).

A J domain is found at 5–69 (DYYEVLGLSK…QKRAQYDQFG (65 aa)). Residues 133 to 215 (GKELNVEIPV…CHGSGKVRKR (83 aa)) form a CR-type zinc finger. The Zn(2+) site is built by Cys146, Cys149, Cys163, Cys166, Cys189, Cys192, Cys203, and Cys206. CXXCXGXG motif repeat units lie at residues 146–153 (CDTCKGSG), 163–170 (CKHCSGSG), 189–196 (CGHCSGTG), and 203–210 (CTTCHGSG).

The protein belongs to the DnaJ family. Homodimer. It depends on Zn(2+) as a cofactor.

It is found in the cytoplasm. Participates actively in the response to hyperosmotic and heat shock by preventing the aggregation of stress-denatured proteins and by disaggregating proteins, also in an autonomous, DnaK-independent fashion. Unfolded proteins bind initially to DnaJ; upon interaction with the DnaJ-bound protein, DnaK hydrolyzes its bound ATP, resulting in the formation of a stable complex. GrpE releases ADP from DnaK; ATP binding to DnaK triggers the release of the substrate protein, thus completing the reaction cycle. Several rounds of ATP-dependent interactions between DnaJ, DnaK and GrpE are required for fully efficient folding. Also involved, together with DnaK and GrpE, in the DNA replication of plasmids through activation of initiation proteins. The sequence is that of Chaperone protein DnaJ from Bacillus cereus (strain ATCC 10987 / NRS 248).